Consider the following 347-residue polypeptide: Photosystem II protein D1 (347 aa).

3 helical membrane passes run 32–49 (YIGWFGILMFPLLVLATV), 121–136 (HFILGAGAYMGREWEF), and 145–159 (WIFVAFSAPLVAASA). Position 121 (H121) interacts with chlorophyll a. Y129 lines the pheophytin a pocket. [CaMn4O5] cluster-binding residues include D173 and E192. The helical transmembrane segment at 200–221 (FHILGVAAVFGGSLFSAMHGSL) threads the bilayer. Position 201 (H201) interacts with chlorophyll a. A quinone-binding positions include H218 and 267-268 (SF). H218 lines the Fe cation pocket. H275 is a Fe cation binding site. The helical transmembrane segment at 277–291 (FLAAWPVIGIWFTAL) threads the bilayer. 4 residues coordinate [CaMn4O5] cluster: H335, E336, D345, and A347.

It belongs to the reaction center PufL/M/PsbA/D family. In terms of assembly, PSII is composed of 1 copy each of membrane proteins PsbA, PsbB, PsbC, PsbD, PsbE, PsbF, PsbH, PsbI, PsbJ, PsbK, PsbL, PsbM, PsbT, PsbX, PsbY, PsbZ, Psb30/Ycf12, at least 3 peripheral proteins of the oxygen-evolving complex and a large number of cofactors. It forms dimeric complexes. The D1/D2 heterodimer binds P680, chlorophylls that are the primary electron donor of PSII, and subsequent electron acceptors. It shares a non-heme iron and each subunit binds pheophytin, quinone, additional chlorophylls, carotenoids and lipids. D1 provides most of the ligands for the Mn4-Ca-O5 cluster of the oxygen-evolving complex (OEC). There is also a Cl(-1) ion associated with D1 and D2, which is required for oxygen evolution. The PSII complex binds additional chlorophylls, carotenoids and specific lipids. serves as cofactor. Post-translationally, tyr-164 forms a radical intermediate that is referred to as redox-active TyrZ, YZ or Y-Z.

Its subcellular location is the plastid. It localises to the chloroplast thylakoid membrane. It catalyses the reaction 2 a plastoquinone + 4 hnu + 2 H2O = 2 a plastoquinol + O2. In terms of biological role, photosystem II (PSII) is a light-driven water:plastoquinone oxidoreductase that uses light energy to abstract electrons from H(2)O, generating O(2) and a proton gradient subsequently used for ATP formation. It consists of a core antenna complex that captures photons, and an electron transfer chain that converts photonic excitation into a charge separation. The D1/D2 (PsbA/PsbD) reaction center heterodimer binds P680, the primary electron donor of PSII as well as several subsequent electron acceptors. The chain is Photosystem II protein D1 from Heterocapsa niei (Dinoflagellate).